The sequence spans 82 residues: Diphthamide biosynthesis protein 3 (82 aa).

Residues 3-59 form the DPH-type MB domain; the sequence is TYDEIEIEDMTFEPENQMFTYPCPCGDRFQIYLDDMFEGEKVAVCPSCSLMIDVVFD. Cysteine 25, cysteine 27, cysteine 47, and cysteine 50 together coordinate Fe cation. The required for interaction with the elongator complex stretch occupies residues 66 to 82; the sequence is YYEEAGIHPPEPIAAAA.

Belongs to the DPH3 family. Component of the 2-(3-amino-3-carboxypropyl)histidine synthase complex composed of DPH1, DPH2, KTI11/DPH3 and a NADH-dependent reductase, predominantly CBR1. Interacts with DPH1. Interacts with DPH2. Interacts with CBR1. Interacts with elongation factor 2. Interacts with ATS1/KTI13; the interaction is direct. Interacts with the 40S ribosomal protein RPS7A. Interacts with the 40S ribosomal protein RPS19A. Interacts with the elongator complex subunit IKI3/ELP1. Interacts with the elongator complex subunit ELP2. Interacts with the elongator complex subunit ELP3. Interacts with the elongator complex subunit ELP5.

It is found in the cytoplasm. The protein localises to the nucleus. It carries out the reaction [3Fe-4S](1+)-[protein] + Fe(2+)-[Dph3] = [3Fe-4S](0)-[protein] + Fe(3+)-[Dph3]. The catalysed reaction is 2 [3Fe-4S](0)-[protein] + 2 Fe(2+)-[Dph3] + NADH = 2 [4Fe-4S](1+)-[protein] + 2 [Dph3] + NAD(+) + H(+). Its pathway is protein modification; peptidyl-diphthamide biosynthesis. Required for the first step of diphthamide biosynthesis, a post-translational modification of histidine which occurs in elongation factor 2. DPH1 and DPH2 transfer a 3-amino-3-carboxypropyl (ACP) group from S-adenosyl-L-methionine (SAM) to a histidine residue, the reaction is assisted by a reduction system comprising KTI11/DPH3 and a NADH-dependent reductase, predominantly CBR1. Acts as an electron donor to reduce the Fe-S cluster in DPH1-DPH2 keeping the [4Fe-4S] clusters in the active and reduced state. Restores iron to DPH1-DPH2 iron-sulfur clusters which have degraded from [4Fe-4S] to [3Fe-4S] by donating an iron atom to reform [4Fe-4S] clusters, in a manner dependent on the presence of elongation factor 2 and SAM. Together with ATS1; associates with the elongator complex and is required for tRNA Wobble base modifications mediated by the elongator complex. The elongator complex is required for multiple tRNA modifications, including mcm5U (5-methoxycarbonylmethyl uridine), mcm5s 2U (5-methoxycarbonylmethyl-2-thiouridine), and ncm5U (5-carbamoylmethyl uridine). In Saccharomyces cerevisiae (strain ATCC 204508 / S288c) (Baker's yeast), this protein is Diphthamide biosynthesis protein 3.